A 374-amino-acid polypeptide reads, in one-letter code: Dual-specificity RNA methyltransferase RlmN (374 aa).

Glu94 (proton acceptor) is an active-site residue. The Radical SAM core domain maps to 100 to 339 (EEDRATLCVS…VTIRKTRGDD (240 aa)). A disulfide bridge connects residues Cys107 and Cys344. 3 residues coordinate [4Fe-4S] cluster: Cys114, Cys118, and Cys121. S-adenosyl-L-methionine is bound by residues 168–169 (GE), Ser200, 222–224 (SLH), and Asn301. The active-site S-methylcysteine intermediate is the Cys344.

It belongs to the radical SAM superfamily. RlmN family. The cofactor is [4Fe-4S] cluster.

The protein resides in the cytoplasm. The enzyme catalyses adenosine(2503) in 23S rRNA + 2 reduced [2Fe-2S]-[ferredoxin] + 2 S-adenosyl-L-methionine = 2-methyladenosine(2503) in 23S rRNA + 5'-deoxyadenosine + L-methionine + 2 oxidized [2Fe-2S]-[ferredoxin] + S-adenosyl-L-homocysteine. It carries out the reaction adenosine(37) in tRNA + 2 reduced [2Fe-2S]-[ferredoxin] + 2 S-adenosyl-L-methionine = 2-methyladenosine(37) in tRNA + 5'-deoxyadenosine + L-methionine + 2 oxidized [2Fe-2S]-[ferredoxin] + S-adenosyl-L-homocysteine. Functionally, specifically methylates position 2 of adenine 2503 in 23S rRNA and position 2 of adenine 37 in tRNAs. m2A2503 modification seems to play a crucial role in the proofreading step occurring at the peptidyl transferase center and thus would serve to optimize ribosomal fidelity. In Vibrio vulnificus (strain YJ016), this protein is Dual-specificity RNA methyltransferase RlmN.